The primary structure comprises 155 residues: Small ribosomal subunit protein uS7cz/uS7cy (155 aa).

Belongs to the universal ribosomal protein uS7 family. Part of the 30S ribosomal subunit.

It is found in the plastid. The protein resides in the chloroplast. Its function is as follows. One of the primary rRNA binding proteins, it binds directly to 16S rRNA where it nucleates assembly of the head domain of the 30S subunit. The protein is Small ribosomal subunit protein uS7cz/uS7cy (rps7-A) of Citrus sinensis (Sweet orange).